The primary structure comprises 104 residues: Phosphoribosyl-ATP pyrophosphatase (104 aa).

It belongs to the PRA-PH family.

Its subcellular location is the cytoplasm. The enzyme catalyses 1-(5-phospho-beta-D-ribosyl)-ATP + H2O = 1-(5-phospho-beta-D-ribosyl)-5'-AMP + diphosphate + H(+). The protein operates within amino-acid biosynthesis; L-histidine biosynthesis; L-histidine from 5-phospho-alpha-D-ribose 1-diphosphate: step 2/9. This is Phosphoribosyl-ATP pyrophosphatase from Rhizobium rhizogenes (strain K84 / ATCC BAA-868) (Agrobacterium radiobacter).